A 347-amino-acid chain; its full sequence is MNTNDFDFELPEELIAQTPLKQRDASKLLVIDPVTREMTDTHFDHIIDQLNPRDALVMNNTRVLPARLYGEKTDTHGHVEFLLLKNTQGDQWEVLAKPAKRLKVGAKVSFGYGRLTATVTEELDHGGRIVEFSYDGIFLEVLESLGEMPLPPYIHEKLEDRDRYQTVYAKENGSAAAPTAGLHFTPELLQKIEAKGVKLVYLTLHVGLGTFRPVSVDNIDEHEMHSEFYTLSQEAADTLNSVKTAGGRIVAVGTTSIRTLETIGNKYDGQLQADSGWTNIFIKPGYQFTVVDAFSTNFHLPKSTLVMLVSAFAGREFVLEAYKHAVQERYRFFSFGDAMFVTRPSEK.

The protein belongs to the QueA family. Monomer.

The protein resides in the cytoplasm. It catalyses the reaction 7-aminomethyl-7-carbaguanosine(34) in tRNA + S-adenosyl-L-methionine = epoxyqueuosine(34) in tRNA + adenine + L-methionine + 2 H(+). It functions in the pathway tRNA modification; tRNA-queuosine biosynthesis. Its function is as follows. Transfers and isomerizes the ribose moiety from AdoMet to the 7-aminomethyl group of 7-deazaguanine (preQ1-tRNA) to give epoxyqueuosine (oQ-tRNA). The protein is S-adenosylmethionine:tRNA ribosyltransferase-isomerase of Streptococcus thermophilus (strain CNRZ 1066).